Reading from the N-terminus, the 141-residue chain is Large ribosomal subunit protein uL11 (141 aa).

The protein belongs to the universal ribosomal protein uL11 family. In terms of assembly, part of the ribosomal stalk of the 50S ribosomal subunit. Interacts with L10 and the large rRNA to form the base of the stalk. L10 forms an elongated spine to which L12 dimers bind in a sequential fashion forming a multimeric L10(L12)X complex. One or more lysine residues are methylated.

Forms part of the ribosomal stalk which helps the ribosome interact with GTP-bound translation factors. The sequence is that of Large ribosomal subunit protein uL11 from Prochlorococcus marinus (strain MIT 9211).